The chain runs to 469 residues: Protein RUFY3 (469 aa).

2 positions are modified to phosphothreonine: Thr-5 and Thr-12. Ser-34 and Ser-49 each carry phosphoserine. Thr-51 bears the Phosphothreonine mark. In terms of domain architecture, RUN spans 95–227 (DSDYAPLQQF…IDANFCMKGE (133 aa)). 2 coiled-coil regions span residues 271–362 (NRHL…VEKE) and 422–463 (KSEL…AANK).

In terms of assembly, interacts with PAK1. Interacts (via C-terminus) with Ras-related Rab-5 proteins. Interacts (via C-terminus) with Ras-related Rap-2 proteins. Interacts with PIK3CA and PIK3R1. Interacts (via N-terminus) with FSCN1; this interaction induces neuron axon development. Interacts with DBN1. Interacts (via the second coiled coil) with GTP-, but not GDP-bound ARL8A and ARL8B. Interacts with dynactin/DCTN1 and the dynein intermediate chain DYNC1I1/2. Directly interacts with DYNC1LI1. Post-translationally, phosphorylated by PAK1. Isoform 1 is partially phosphorylated. In terms of tissue distribution, overexpressed in gastric cancer cells and tissues (at protein level).

It localises to the cytoplasm. Its subcellular location is the endomembrane system. The protein resides in the cell projection. The protein localises to the invadopodium. It is found in the perikaryon. It localises to the growth cone. Its subcellular location is the filopodium. The protein resides in the lamellipodium. The protein localises to the lysosome. ARL8 effector that promotes the coupling of endolysosomes to dynein-dynactin for retrograde transport along microtubules. Acts by binding both GTP-bound ARL8 and dynein-dynactin. In nonneuronal cells, promotes concentration of endolysosomes in the juxtanuclear area. In hippocampal neurons, drives retrograde transport of endolysosomes from the axon to the soma. Plays a role in the generation of neuronal polarity formation and axon growth. Implicated in the formation of a single axon by developing neurons. May inhibit the formation of additional axons by inhibition of PI3K in minor neuronal processes. Plays a role in the formation of F-actin-enriched protrusive structures at the cell periphery. Plays a role in cytoskeletal organization by regulating the subcellular localization of FSCN1 and DBN1 at axonal growth cones. This is Protein RUFY3 from Homo sapiens (Human).